Consider the following 565-residue polypeptide: MIPREVIEEIKEKVDIVEVISEYVNLTRVGSSYRALCPFHSETNPSFYVHPGLKIYHCFGCGASGDVIKFLQEMEGISFQEALERLAKRAGIDLSLYRTEGTSEYGKYIRLYEETWKRYVKELEKSKEAKDYLKSRGFSEEDIAKFGFGYVPKRSSISIEVAEGMNITLEELVRYGIALKKGDRFVDRFEGRIVVPIKNDSGHIVAFGGRALGNEEPKYLNSPETRYFSKKKTLFLFDEAKKVAKEVGFFVITEGYFDALAFRKDGIPTAVAVLGASLSREAILKLSAYSKNVILCFDNDKAGFRATLKSLEDLLDYEFNVLVATPSPYKDPDELFQKEGEGSLKKMLKNSRSFEYFLVTAGEVFFDRNSPAGVRSYLSFLKGWVQKMRRKGYLKHIENLVNEVSSSLQIPENQILNFFESDRSNTMPVHETKSSKVYDEGRGLAYLFLNYEDLREKILELDLEVLEDKNAREFFKRVSLGEDLNKVIENFPKELKDWIFETIESIPPPKDPEKFLGDLSEKLKIRRIERRIAEIDDMIKKASNDEERRLLLSMKVDLLRKIKRR.

The CHC2-type zinc finger occupies 37 to 61 (CPFHSETNPSFYVHPGLKIYHCFGC). Residues 248–329 (GFFVITEGYF…NVLVATPSPY (82 aa)) enclose the Toprim domain. 3 residues coordinate Mg(2+): Glu254, Asp298, and Asp300.

Belongs to the DnaG primase family. Monomer. Interacts with DnaB. Zn(2+) is required as a cofactor. Mg(2+) serves as cofactor.

It catalyses the reaction ssDNA + n NTP = ssDNA/pppN(pN)n-1 hybrid + (n-1) diphosphate.. Its function is as follows. RNA polymerase that catalyzes the synthesis of short RNA molecules used as primers for DNA polymerase during DNA replication. The polypeptide is DNA primase (Thermotoga maritima (strain ATCC 43589 / DSM 3109 / JCM 10099 / NBRC 100826 / MSB8)).